The sequence spans 175 residues: Protein tyrosine phosphatase PRL-1 (175 aa).

Residues 15–172 (KPSRVLFHFL…YKRRHQGAGC (158 aa)) form the Tyrosine-protein phosphatase domain. The cysteines at positions 53 and 114 are disulfide-linked. D76 (proton donor) is an active-site residue. The Phosphocysteine intermediate role is filled by C114. 116-120 (AGLGR) contributes to the substrate binding site. Cysteine methyl ester is present on C172. Residue C172 is the site of S-farnesyl cysteine attachment. The propeptide at 173-175 (VIM) is removed in mature form.

It belongs to the protein-tyrosine phosphatase family.

The protein resides in the cytoplasm. The protein localises to the mitochondrion matrix. Its subcellular location is the kinetoplast. It is found in the secreted. It localises to the extracellular exosome. It carries out the reaction O-phospho-L-tyrosyl-[protein] + H2O = L-tyrosyl-[protein] + phosphate. Its activity is regulated as follows. Activated in a reduced environment which promotes the reduction of the disulfide bond between the regulatory Cys-53 and catalytic Cys-114 residues. In terms of biological role, has protein tyrosine phosphatase activity and may act as a virulence factor to support intracellular survival in host macrophages. This chain is Protein tyrosine phosphatase PRL-1, found in Leishmania major.